Reading from the N-terminus, the 309-residue chain is Aspartate carbamoyltransferase catalytic subunit (309 aa).

Carbamoyl phosphate-binding residues include R59 and T60. Residue K87 coordinates L-aspartate. 3 residues coordinate carbamoyl phosphate: R109, H139, and Q142. L-aspartate contacts are provided by R172 and R224. The carbamoyl phosphate site is built by A265 and P266.

The protein belongs to the aspartate/ornithine carbamoyltransferase superfamily. ATCase family. As to quaternary structure, heterododecamer (2C3:3R2) of six catalytic PyrB chains organized as two trimers (C3), and six regulatory PyrI chains organized as three dimers (R2).

It catalyses the reaction carbamoyl phosphate + L-aspartate = N-carbamoyl-L-aspartate + phosphate + H(+). It functions in the pathway pyrimidine metabolism; UMP biosynthesis via de novo pathway; (S)-dihydroorotate from bicarbonate: step 2/3. Functionally, catalyzes the condensation of carbamoyl phosphate and aspartate to form carbamoyl aspartate and inorganic phosphate, the committed step in the de novo pyrimidine nucleotide biosynthesis pathway. This is Aspartate carbamoyltransferase catalytic subunit from Streptococcus uberis (strain ATCC BAA-854 / 0140J).